The primary structure comprises 210 residues: Thymidylate kinase (210 aa).

11 to 18 serves as a coordination point for ATP; it reads GLEGAGKS.

This sequence belongs to the thymidylate kinase family.

It catalyses the reaction dTMP + ATP = dTDP + ADP. Its function is as follows. Phosphorylation of dTMP to form dTDP in both de novo and salvage pathways of dTTP synthesis. In Vibrio parahaemolyticus serotype O3:K6 (strain RIMD 2210633), this protein is Thymidylate kinase.